The primary structure comprises 364 residues: Developmentally-regulated GTP-binding protein 2 (364 aa).

At K21 the chain carries (3S)-3-hydroxylysine. The OBG-type G domain occupies 63–288 (ARVALIGFPS…LLEMLWEYLA (226 aa)). Residues 69 to 76 (GFPSVGKS), 94 to 98 (FTTLT), 115 to 118 (DLPG), 246 to 249 (NKID), and 269 to 271 (SCG) each bind GTP. 2 residues coordinate Mg(2+): S76 and T96. One can recognise a TGS domain in the interval 288–363 (ALTCIYTKKR…EHEDVIQIVK (76 aa)).

The protein belongs to the TRAFAC class OBG-HflX-like GTPase superfamily. OBG GTPase family. In terms of assembly, interacts with RWDD1; this interaction confers protection to polyubiquitination and proteolytic degradation. Interacts with JMJD7; this interaction is direct. Mg(2+) serves as cofactor. Post-translationally, polyubiquitinated. In terms of processing, hydroxylated (with S stereochemistry) at C-3 of Lys-21 by JMJD7. As to expression, fairly high levels in liver, heart, kidney, and brain. Very low levels in lung, spleen, testis and skeletal muscle.

The protein localises to the nucleus. It localises to the cytoplasm. It carries out the reaction GTP + H2O = GDP + phosphate + H(+). Catalyzes the conversion of GTP to GDP through hydrolysis of the gamma-phosphate bond in GTP. When hydroxylated at C-3 of 'Lys-21' by JMJD7, may bind to RNA and play a role in translation. This Mus musculus (Mouse) protein is Developmentally-regulated GTP-binding protein 2 (Drg2).